The chain runs to 274 residues: NH(3)-dependent NAD(+) synthetase (274 aa).

46–53 (GISGGQDS) contacts ATP. Residue Asp52 participates in Mg(2+) binding. Arg140 is a binding site for deamido-NAD(+). Thr160 contacts ATP. Glu165 provides a ligand contact to Mg(2+). Residues Lys173 and Asp180 each contribute to the deamido-NAD(+) site. Residues Lys189 and Thr211 each coordinate ATP. Deamido-NAD(+) is bound at residue 260 to 261 (HK).

Belongs to the NAD synthetase family. In terms of assembly, homodimer.

It carries out the reaction deamido-NAD(+) + NH4(+) + ATP = AMP + diphosphate + NAD(+) + H(+). It participates in cofactor biosynthesis; NAD(+) biosynthesis; NAD(+) from deamido-NAD(+) (ammonia route): step 1/1. Functionally, catalyzes the ATP-dependent amidation of deamido-NAD to form NAD. Uses ammonia as a nitrogen source. The protein is NH(3)-dependent NAD(+) synthetase of Streptococcus pneumoniae (strain Hungary19A-6).